The chain runs to 397 residues: Succinate--CoA ligase [ADP-forming] subunit beta (397 aa).

One can recognise an ATP-grasp domain in the interval 9-254 (KALLKGYGAP…ETEEDAKEIE (246 aa)). Residues Lys46, 53–55 (GRG), Glu109, Ala112, and Glu117 each bind ATP. The Mg(2+) site is built by Asn209 and Asp223. Substrate is bound by residues Asn274 and 331–333 (GIM).

This sequence belongs to the succinate/malate CoA ligase beta subunit family. Heterotetramer of two alpha and two beta subunits. Mg(2+) serves as cofactor.

It carries out the reaction succinate + ATP + CoA = succinyl-CoA + ADP + phosphate. The catalysed reaction is GTP + succinate + CoA = succinyl-CoA + GDP + phosphate. It participates in carbohydrate metabolism; tricarboxylic acid cycle; succinate from succinyl-CoA (ligase route): step 1/1. Its function is as follows. Succinyl-CoA synthetase functions in the citric acid cycle (TCA), coupling the hydrolysis of succinyl-CoA to the synthesis of either ATP or GTP and thus represents the only step of substrate-level phosphorylation in the TCA. The beta subunit provides nucleotide specificity of the enzyme and binds the substrate succinate, while the binding sites for coenzyme A and phosphate are found in the alpha subunit. The protein is Succinate--CoA ligase [ADP-forming] subunit beta of Agrobacterium fabrum (strain C58 / ATCC 33970) (Agrobacterium tumefaciens (strain C58)).